Reading from the N-terminus, the 129-residue chain is NADPH-dependent 7-cyano-7-deazaguanine reductase (129 aa).

Cys42 functions as the Thioimide intermediate in the catalytic mechanism. Asp49 acts as the Proton donor in catalysis. Substrate contacts are provided by residues 64–66 and 83–84; these read VEL and HE.

It belongs to the GTP cyclohydrolase I family. QueF type 1 subfamily.

It localises to the cytoplasm. The enzyme catalyses 7-aminomethyl-7-carbaguanine + 2 NADP(+) = 7-cyano-7-deazaguanine + 2 NADPH + 3 H(+). It participates in tRNA modification; tRNA-queuosine biosynthesis. Functionally, catalyzes the NADPH-dependent reduction of 7-cyano-7-deazaguanine (preQ0) to 7-aminomethyl-7-deazaguanine (preQ1). The chain is NADPH-dependent 7-cyano-7-deazaguanine reductase from Synechococcus sp. (strain CC9605).